The chain runs to 288 residues: Homeobox protein Hox-B4a (288 aa).

The tract at residues 10 to 136 (SNYVDPKFPP…ASSPASTRKD (127 aa)) is disordered. Over residues 118–132 (CGQTPHSQGASSPAS) the composition is skewed to polar residues. The Antp-type hexapeptide signature appears at 139-144 (VYPWMK). The homeobox DNA-binding region spans 160 to 219 (PKRSRTAYTRQQVLELEKEFHYNRYLTRRRRVEIAHTLCLSERQIKIWFQNRRMKWKKDH).

It belongs to the Antp homeobox family. Deformed subfamily.

The protein localises to the nucleus. Its function is as follows. Sequence-specific transcription factor which is part of a developmental regulatory system that provides cells with specific positional identities on the anterior-posterior axis. In Takifugu rubripes (Japanese pufferfish), this protein is Homeobox protein Hox-B4a (hoxb4a).